The following is a 25-amino-acid chain: FNPCPYSDDTVKMIILTRENKKHDF.

This sequence belongs to the AB hydrolase superfamily. Lipase family. Contains six disulfide bonds. Expressed by the venom gland.

The protein resides in the secreted. The catalysed reaction is a 1,2-diacyl-sn-glycero-3-phosphocholine + H2O = a 2-acyl-sn-glycero-3-phosphocholine + a fatty acid + H(+). The enzyme catalyses 1-(9Z-octadecenoyl)-2-hexadecanoyl-sn-glycero-3-phosphocholine + H2O = 2-hexadecanoyl-sn-glycero-3-phosphocholine + (9Z)-octadecenoate + H(+). It catalyses the reaction a 1-acyl-sn-glycero-3-phosphocholine + H2O = sn-glycerol 3-phosphocholine + a fatty acid + H(+). The protein operates within phospholipid metabolism. With respect to regulation, activity is maximal in the presence of calcium. However, unlike phospholipases A2 whose catalytic activity is strictly calcium-dependent, this enzyme shows considerable catalytic activity on phosphatidylcholine emulsified in calcium free solution; the catalytic activity of VT-2a assayed in the absence of calcium ions is 18-20% of that assayed in solution containing calcium ions. In terms of biological role, catalyzes the hydrolysis of glycerophospholipids such as phosphatidylcholine (1,2-diacyl-sn-glycero-3-phosphocholine) and has a moderate activity to hydrolyze lysoglycerophospholipids such as lysophosphatidylcholine (1-acyl-sn-glycero-3-phosphocholine), but is unable to hydrolyze sphingomyelin. In addition to acting as an allergen, it possesses a potent hemolytic activity on red blood cells of mice (98.8% of hemolysis at 3.0 ug/ml). The protein is Phospholipase A1 verutoxin-2a of Vespa velutina (Asian yellow-legged hornet).